The chain runs to 327 residues: Methionine import ATP-binding protein MetN (327 aa).

The ABC transporter domain maps to Val3–Leu239. An ATP-binding site is contributed by Gly36–Ser43.

The protein belongs to the ABC transporter superfamily. Methionine importer (TC 3.A.1.24) family. The complex is composed of two ATP-binding proteins (MetN), two transmembrane proteins (MetI) and a solute-binding protein (MetQ).

It localises to the cell inner membrane. It carries out the reaction L-methionine(out) + ATP + H2O = L-methionine(in) + ADP + phosphate + H(+). The catalysed reaction is D-methionine(out) + ATP + H2O = D-methionine(in) + ADP + phosphate + H(+). Part of the ABC transporter complex MetNIQ involved in methionine import. Responsible for energy coupling to the transport system. The polypeptide is Methionine import ATP-binding protein MetN (Helicobacter pylori (strain J99 / ATCC 700824) (Campylobacter pylori J99)).